The following is a 1358-amino-acid chain: MSRQSTLYSFFPKSPALGDTKKAAAEASRQGAAASGASASRGGDAAWSEAEPGSRSAAVSASSPEAKDLNGGLRRASSSAQAVPPSSCDFSPGDLVWAKMEGYPWWPCLVYNHPFDGTFIRKKGKSVRVHVQFFDDSPTRGWVSKRMLKPYTGSKSKEAQKGGHFYSSKSEILRAMQRADEALSKDTAERLQLAVCDEPSEPEEEEETEVHEAYLSDKSEEDNYNESEEEAQPSVQGPRRSSRQVKKRRVISDSESDIGGSDVEFKPDTKQEGSSDDASSGVGDSDSEDLGTFGKGAPKRKRAMVAQGGLRRKSLKKETGSAKRATPILSETKSTLSAFSAPQNSESQTHVSGGGNDSSGPTVWYHETLEWLKPEKRRDEHRRRPDHPEFNPTTLYVPEEFLNSCTPGMRKWWQLKSQNFDLVIFYKVGKFYELYHMDAVIGVSELGLIFMKGNWAHSGFPEIAFGRFSDSLVQKGYKVARVEQTETPEMMEARCRKMAHVSKFDRVVRREICRIITKGTQTYSVLDGDPSENYSRYLLSLKEKEEETSGHTRVYGVCFVDTSLGKFFIGQFSDDRHCSRFRTLVAHYPPVQILFEKGNLSTETKTVLKGSLSSCLQEGLIPGSQFWDATKTLRTLLEGGYFTGNGDSSTVLPLVLKGMTSESDSVGLTPGEESELALSALGGIVFYLKKCLIDQELLSMANFEEYFPLDSDTVSTVKPGAVFTKASQRMVLDAVTLNNLEIFLNGTNGSTEGTLLERLDTCHTPFGKRLLKQWLCAPLCSPSAISDRLDAVEDLMAVPDKVTEVADLLKKLPDLERLLSKIHNVGSPLKSQNHPDSRAIMYEETTYSKKKIIDFLSALEGFKVMCKVSGLLEEVAGGFTSKTLKQVVTLQSKSPKGRFPDLTAELQRWDTAFDHEKARKTGLITPKAGFDSDYDQALADIRENEQSLLEYLDKQRSRLGCKSIVYWGIGRNRYQLEIPENFATRNLPEEYELKSTKKGCKRYWTKTIEKKLANLINAEERRDTSLKDCMRRLFCNFDKNHKDWQSAVECIAVLDVLLCLANYSQGGDGPMCRPEIVLPGEDTHPFLEFKGSRHPCITKTFFGDDFIPNDILIGCEEEAEEHGKAYCVLVTGPNMGGKSTLIRQAGLLAVMAQLGCYVPAEKCRLTPVDRVFTRLGASDRIMSGESTFFVELSETASILRHATAHSLVLVDELGRGTATFDGTAIANAVVKELAETIKCRTLFSTHYHSLVEDYSKSVCVRLGHMACMVENECEDPSQETITFLYKFIKGACPKSYGFNAARLANLPEEVIQKGHRKAREFERMNQSLQLFREVCLATEKPTINGEAIHRLLALINGL.

The segment at 1–87 (MSRQSTLYSF…SSAQAVPPSS (87 aa)) is disordered. A phosphoserine mark is found at Ser14, Ser38, and Ser40. Residues 25–46 (AEASRQGAAASGASASRGGDAA) show a composition bias toward low complexity. Lys67 bears the N6-acetyllysine mark. Low complexity predominate over residues 76-87 (ASSSAQAVPPSS). Phosphoserine occurs at positions 91, 137, 200, 219, and 227. One can recognise a PWWP domain in the interval 92–154 (PGDLVWAKME…KRMLKPYTGS (63 aa)). The segment at 197–360 (DEPSEPEEEE…VSGGGNDSSG (164 aa)) is disordered. Acidic residues-rich tracts occupy residues 198 to 209 (EPSEPEEEEETE) and 219 to 231 (SEED…EEEA). Positions 240–249 (RSSRQVKKRR) are enriched in basic residues. A phosphoserine mark is found at Ser252, Ser254, Ser256, and Ser261. Residues 263 to 273 (VEFKPDTKQEG) show a composition bias toward basic and acidic residues. Thr269 is modified (phosphothreonine). Residues Ser274, Ser275, Ser279, and Ser280 each carry the phosphoserine modification. The span at 329-351 (LSETKSTLSAFSAPQNSESQTHV) shows a compositional bias: polar residues. The residue at position 487 (Thr487) is a Phosphothreonine. An N6-acetyllysine modification is found at Lys503. Ser827 and Ser932 each carry phosphoserine. At Thr1007 the chain carries Phosphothreonine. Position 1132–1139 (1132–1139 (GPNMGGKS)) interacts with ATP.

The protein belongs to the DNA mismatch repair MutS family. In terms of assembly, component of the DNA mismatch repair (MMR) complex composed at least of MSH2, MSH3, MSH6, PMS1 and MLH1. Heterodimer consisting of MSH2-MSH6 (MutS alpha). Forms a ternary complex with MutL alpha (MLH1-PMS1). Interacts with MCM9. Part of the BRCA1-associated genome surveillance complex (BASC), which contains BRCA1, MSH2, MSH6, MLH1, ATM, BLM, PMS2 and the RAD50-MRE11-NBS1 protein complex. This association could be a dynamic process changing throughout the cell cycle and within subnuclear domains. Phosphorylated by PRKCZ, which may prevent MutS alpha degradation by the ubiquitin-proteasome pathway.

It localises to the nucleus. It is found in the chromosome. Functionally, component of the post-replicative DNA mismatch repair system (MMR). Heterodimerizes with MSH2 to form MutS alpha, which binds to DNA mismatches thereby initiating DNA repair. When bound, MutS alpha bends the DNA helix and shields approximately 20 base pairs, and recognizes single base mismatches and dinucleotide insertion-deletion loops (IDL) in the DNA. After mismatch binding, forms a ternary complex with the MutL alpha heterodimer, which is thought to be responsible for directing the downstream MMR events, including strand discrimination, excision, and resynthesis. ATP binding and hydrolysis play a pivotal role in mismatch repair functions. The ATPase activity associated with MutS alpha regulates binding similar to a molecular switch: mismatched DNA provokes ADP--&gt;ATP exchange, resulting in a discernible conformational transition that converts MutS alpha into a sliding clamp capable of hydrolysis-independent diffusion along the DNA backbone. This transition is crucial for mismatch repair. MutS alpha may also play a role in DNA homologous recombination repair. Recruited on chromatin in G1 and early S phase via its PWWP domain that specifically binds trimethylated 'Lys-36' of histone H3 (H3K36me3): early recruitment to chromatin to be replicated allowing a quick identification of mismatch repair to initiate the DNA mismatch repair reaction. This is DNA mismatch repair protein Msh6 from Mus musculus (Mouse).